The chain runs to 431 residues: Probable zinc metalloprotease Lema_P086240 (431 aa).

Asn46 carries N-linked (GlcNAc...) asparagine glycosylation. 3 residues coordinate Zn(2+): His117, Asp137, and Glu170. N-linked (GlcNAc...) asparagine glycosylation is present at Asn185. Asp197 contributes to the Zn(2+) binding site. 5 N-linked (GlcNAc...) asparagine glycosylation sites follow: Asn258, Asn310, Asn349, Asn359, and Asn369. The Fibronectin type-III domain maps to 344-431; it reads PGMPRNVTID…KSPAVYPFPG (88 aa).

Belongs to the peptidase M28 family. M28B subfamily. Requires Zn(2+) as cofactor.

Its subcellular location is the secreted. This Leptosphaeria maculans (strain JN3 / isolate v23.1.3 / race Av1-4-5-6-7-8) (Blackleg fungus) protein is Probable zinc metalloprotease Lema_P086240.